The chain runs to 66 residues: uncharacterized protein (66 aa).

This is an uncharacterized protein from Vertebrata (FPV).